An 83-amino-acid polypeptide reads, in one-letter code: Large ribosomal subunit protein bL31 (83 aa).

The protein belongs to the bacterial ribosomal protein bL31 family. Type A subfamily. As to quaternary structure, part of the 50S ribosomal subunit.

Binds the 23S rRNA. The sequence is that of Large ribosomal subunit protein bL31 from Synechococcus sp. (strain CC9605).